Reading from the N-terminus, the 285-residue chain is Acetyl-coenzyme A carboxylase carboxyl transferase subunit beta (285 aa).

Residues 29–285 (IMTKCPKCKK…ILKIHQEVTK (257 aa)) form the CoA carboxyltransferase N-terminal domain. Positions 33, 36, 52, and 55 each coordinate Zn(2+). Residues 33–55 (CPKCKKIMYTKELAENLNVCFNC) form a C4-type zinc finger.

It belongs to the AccD/PCCB family. In terms of assembly, acetyl-CoA carboxylase is a heterohexamer composed of biotin carboxyl carrier protein (AccB), biotin carboxylase (AccC) and two subunits each of ACCase subunit alpha (AccA) and ACCase subunit beta (AccD). The cofactor is Zn(2+).

Its subcellular location is the cytoplasm. It catalyses the reaction N(6)-carboxybiotinyl-L-lysyl-[protein] + acetyl-CoA = N(6)-biotinyl-L-lysyl-[protein] + malonyl-CoA. The protein operates within lipid metabolism; malonyl-CoA biosynthesis; malonyl-CoA from acetyl-CoA: step 1/1. Functionally, component of the acetyl coenzyme A carboxylase (ACC) complex. Biotin carboxylase (BC) catalyzes the carboxylation of biotin on its carrier protein (BCCP) and then the CO(2) group is transferred by the transcarboxylase to acetyl-CoA to form malonyl-CoA. This is Acetyl-coenzyme A carboxylase carboxyl transferase subunit beta from Staphylococcus aureus (strain Mu3 / ATCC 700698).